Reading from the N-terminus, the 129-residue chain is NHP2-like protein 1 homolog (129 aa).

This sequence belongs to the eukaryotic ribosomal protein eL8 family.

The protein localises to the nucleus. Its subcellular location is the nucleolus. In terms of biological role, binds to the 5'-stem-loop of U4 snRNA and may play a role in the late stage of spliceosome assembly. The protein undergoes a conformational change upon RNA-binding. This is NHP2-like protein 1 homolog from Dictyostelium discoideum (Social amoeba).